The sequence spans 216 residues: Urease accessory protein UreG (216 aa).

24–31 (GPVGSGKT) serves as a coordination point for GTP.

It belongs to the SIMIBI class G3E GTPase family. UreG subfamily. Homodimer. UreD, UreF and UreG form a complex that acts as a GTP-hydrolysis-dependent molecular chaperone, activating the urease apoprotein by helping to assemble the nickel containing metallocenter of UreC. The UreE protein probably delivers the nickel.

It localises to the cytoplasm. Functionally, facilitates the functional incorporation of the urease nickel metallocenter. This process requires GTP hydrolysis, probably effectuated by UreG. The polypeptide is Urease accessory protein UreG (Variovorax paradoxus (strain S110)).